The chain runs to 267 residues: Oxidoreductase ordB (267 aa).

This sequence belongs to the avfA family.

It functions in the pathway mycotoxin biosynthesis. Functionally, oxidoreductase; part of the fragmented gene cluster that mediates the biosynthesis of dothistromin (DOTH), a polyketide toxin very similar in structure to the aflatoxin precursor, versicolorin B. The first step of the pathway is the conversion of acetate to norsolorinic acid (NOR) and requires the fatty acid synthase subunits hexA and hexB, as well as the polyketide synthase pksA. PksA combines a hexanoyl starter unit and 7 malonyl-CoA extender units to synthesize the precursor NOR. The hexanoyl starter unit is provided to the acyl-carrier protein (ACP) domain by the fungal fatty acid synthase hexA/hexB. The second step is the conversion of NOR to averantin (AVN) and requires the norsolorinic acid ketoreductase nor1, which catalyzes the dehydration of norsolorinic acid to form (1'S)-averantin. The cytochrome P450 monooxygenase avnA then catalyzes the hydroxylation of AVN to 5'hydroxyaverantin (HAVN). The next step is performed by adhA that transforms HAVN to averufin (AVF). Averufin might then be converted to hydroxyversicolorone by cypX and avfA. Hydroxyversicolorone is further converted versiconal hemiacetal acetate (VHA) by moxY. VHA is then the substrate for the versiconal hemiacetal acetate esterase est1 to yield versiconal (VAL). Versicolorin B synthase vbsA then converts VAL to versicolorin B (VERB) by closing the bisfuran ring. Then, the activity of the versicolorin B desaturase verB leads to versicolorin A (VERA). DotB, a predicted chloroperoxidase, may perform epoxidation of the A-ring of VERA. Alternatively, a cytochrome P450, such as cypX or avnA could catalyze this step. It is also possible that another, uncharacterized, cytochrome P450 enzyme is responsible for this step. Opening of the epoxide could potentially be achieved by the epoxide hydrolase epoA. However, epoA seems not to be required for DOTH biosynthesis, but other epoxide hydrolases may have the ability to complement this hydrolysis. Alternatively, opening of the epoxide ring could be achieved non-enzymatically. The next step is the deoxygenation of ring A to yield the 5,8-dihydroxyanthraquinone which is most likely catalyzed by the NADPH dehydrogenase encoded by ver1. The last stages of DOTH biosynthesis are proposed to involve hydroxylation of the bisfuran. OrdB and norB might have oxidative roles here. An alternative possibility is that cytochrome P450 monoogenases such as avnA and cypX might perform these steps in addition to previously proposed steps. The sequence is that of Oxidoreductase ordB from Dothistroma septosporum (strain NZE10 / CBS 128990) (Red band needle blight fungus).